Consider the following 127-residue polypeptide: Large ribosomal subunit protein bL17 (127 aa).

Belongs to the bacterial ribosomal protein bL17 family. In terms of assembly, part of the 50S ribosomal subunit. Contacts protein L32.

The polypeptide is Large ribosomal subunit protein bL17 (Stenotrophomonas maltophilia (strain R551-3)).